The chain runs to 209 residues: Transcription factor 23 (209 aa).

Disordered regions lie at residues 1 to 20 and 54 to 85; these read MSQEATEAPAMPGEGHGHNK and LSRATSAPRGTRARGTAHGRSEASPENAARER. The segment covering 72 to 85 has biased composition (basic and acidic residues); the sequence is GRSEASPENAARER. In terms of domain architecture, bHLH spans 75 to 127; it reads EASPENAARERTRVKTLRQAFLALQAALPAVPPDTKLSKLDVLVLATSYIAHL.

Forms inactive heterodimeric complex with TCF3. As to expression, highly expressed in the uterus (predominantly in myometrium), ovary, and testis. Expression in the uterus is higher in the diestrus phase than in the estrus phase and reaches a maximum at 7.5 dpc. Expression declines towards the time of delivery and returns to the non-pregnant level 4 days after delivery. Low expression seen in lung, heart, intestine, and spleen.

It localises to the nucleus. Functionally, inhibits E-box-mediated binding and transactivation of bHLH factors. Inhibitory effect is similar to that of ID proteins. Inhibits the formation of TCF3 and MYOD1 homodimers and heterodimers. Lacks DNA binding activity. May be involved in the regulation or modulation of smooth muscle contraction of the uterus during pregnancy and particularly around the time of delivery. Seems to play a role in the inhibition of myogenesis. The sequence is that of Transcription factor 23 (Tcf23) from Mus musculus (Mouse).